A 192-amino-acid chain; its full sequence is Peptidyl-tRNA hydrolase (192 aa).

Position 17 (Tyr-17) interacts with tRNA. The active-site Proton acceptor is the His-22. The tRNA site is built by Phe-68, Asn-70, and Asn-116.

It belongs to the PTH family. In terms of assembly, monomer.

The protein resides in the cytoplasm. The enzyme catalyses an N-acyl-L-alpha-aminoacyl-tRNA + H2O = an N-acyl-L-amino acid + a tRNA + H(+). In terms of biological role, hydrolyzes ribosome-free peptidyl-tRNAs (with 1 or more amino acids incorporated), which drop off the ribosome during protein synthesis, or as a result of ribosome stalling. Functionally, catalyzes the release of premature peptidyl moieties from peptidyl-tRNA molecules trapped in stalled 50S ribosomal subunits, and thus maintains levels of free tRNAs and 50S ribosomes. This is Peptidyl-tRNA hydrolase from Xylella fastidiosa (strain M12).